A 230-amino-acid polypeptide reads, in one-letter code: Large ribosomal subunit protein uL1 (230 aa).

Belongs to the universal ribosomal protein uL1 family. As to quaternary structure, part of the 50S ribosomal subunit.

Its function is as follows. Binds directly to 23S rRNA. The L1 stalk is quite mobile in the ribosome, and is involved in E site tRNA release. Protein L1 is also a translational repressor protein, it controls the translation of the L11 operon by binding to its mRNA. This is Large ribosomal subunit protein uL1 from Leuconostoc mesenteroides subsp. mesenteroides (strain ATCC 8293 / DSM 20343 / BCRC 11652 / CCM 1803 / JCM 6124 / NCDO 523 / NBRC 100496 / NCIMB 8023 / NCTC 12954 / NRRL B-1118 / 37Y).